We begin with the raw amino-acid sequence, 1601 residues long: Polycomb group protein Psc (1601 aa).

2 disordered regions span residues methionine 1–threonine 91 and asparagine 165–threonine 245. Low complexity-rich tracts occupy residues alanine 8–threonine 91 and serine 182–serine 198. The segment covering tryptophan 199–glycine 215 has biased composition (polar residues). Low complexity predominate over residues threonine 228–threonine 245. An RING-type zinc finger spans residues cysteine 263–glutamate 302. 7 disordered regions span residues lysine 561 to aspartate 693, valine 711 to proline 856, isoleucine 895 to tyrosine 960, tyrosine 1011 to glutamine 1097, serine 1116 to lysine 1315, asparagine 1330 to methionine 1408, and alanine 1512 to lysine 1601. Low complexity predominate over residues serine 567–proline 590. Basic and acidic residues predominate over residues aspartate 611–serine 637. The segment covering proline 638–serine 649 has biased composition (low complexity). A phosphoserine mark is found at serine 656 and serine 658. Over residues serine 676–alanine 689 the composition is skewed to polar residues. A compositionally biased stretch (low complexity) spans serine 729 to lysine 739. Over residues leucine 812–leucine 822 the composition is skewed to pro residues. Residues threonine 929–valine 938 are compositionally biased toward polar residues. Residues tyrosine 1011–glycine 1022 are compositionally biased toward low complexity. Residues leucine 1036–glycine 1045 are compositionally biased toward gly residues. Residues serine 1069–isoleucine 1085 show a composition bias toward low complexity. The span at serine 1116–glutamine 1133 shows a compositional bias: polar residues. At serine 1139 the chain carries Phosphoserine. The span at proline 1204 to serine 1217 shows a compositional bias: pro residues. 3 positions are modified to phosphothreonine: threonine 1222, threonine 1236, and threonine 1251. The span at valine 1247 to threonine 1258 shows a compositional bias: basic and acidic residues. Serine 1253, serine 1266, and serine 1274 each carry phosphoserine. Positions glutamine 1261–asparagine 1272 are enriched in polar residues. 2 stretches are compositionally biased toward polar residues: residues glutamine 1352–alanine 1375 and alanine 1561–alanine 1587.

Component of PRC1 complex, which contains many PcG proteins like Pc, ph, Scm, Psc, Sce and also chromatin-remodeling proteins such as histone deacetylases. This complex is distinct from the Esc/E(z) complex, at least composed of esc, E(z), Su(z)12, HDAC1/Rpd3 and Caf1-55. The 2 complexes however cooperate and interact together during the first 3 hours of development to establish PcG silencing.

It localises to the nucleus. Its function is as follows. Polycomb group (PcG) protein. PcG proteins act by forming multiprotein complexes, which are required to maintain the transcriptionally repressive state of homeotic genes throughout development. PcG proteins are not required to initiate repression, but to maintain it during later stages of development. Component of the PcG multiprotein PRC1 complex, a complex that acts via chromatin remodeling and modification of histones; it mediates monoubiquitination of histone H2A 'Lys-118', rendering chromatin heritably changed in its expressibility. Needed to maintain expression patterns of the homeotic selector genes of the Antennapedia (Antp-C) and Bithorax (BX-C) complexes, and hence for the maintenance of segmental determination. This is Polycomb group protein Psc (Psc) from Drosophila melanogaster (Fruit fly).